The sequence spans 285 residues: MKFGIVINVSRERALELARKLVSWLEAQGIGYIFETLSAERIGSALSAPIEELNTQCDAFISLGGDGTLLFTSQHSVTKPVVGINVGYLGFLTEFTQEEMFDAVEKVIKGTYTIHTRTQLEASVPADGRNEQFLALNDVVIEKGTYPRIPAFVIKLDGELLSSYRADGIIIATSTGSTAYSMSAGGPIIAPKSSVFVITPICPHMLTVRPIVISDEKIIEISVEAPDGEFPLNCDGHLRRMLEPMERVTVRKSIRLINLVANENRDYCEVLRTKLLWGREHNSGL.

Aspartate 66 functions as the Proton acceptor in the catalytic mechanism. NAD(+) is bound by residues 66–67 (DG), 137–138 (ND), arginine 148, arginine 165, aspartate 167, and 178–183 (TAYSMS).

It belongs to the NAD kinase family. A divalent metal cation is required as a cofactor.

The protein resides in the cytoplasm. It carries out the reaction NAD(+) + ATP = ADP + NADP(+) + H(+). In terms of biological role, involved in the regulation of the intracellular balance of NAD and NADP, and is a key enzyme in the biosynthesis of NADP. Catalyzes specifically the phosphorylation on 2'-hydroxyl of the adenosine moiety of NAD to yield NADP. This is NAD kinase from Chlorobium luteolum (strain DSM 273 / BCRC 81028 / 2530) (Pelodictyon luteolum).